The primary structure comprises 496 residues: Apolipoprotein N-acyltransferase (496 aa).

The next 6 helical transmembrane spans lie at 6–26 (IICL…FFIP), 50–70 (FGYL…SIGV), 77–97 (FWWA…FFIS), 114–134 (LIFC…LTGL), 148–168 (ILIQ…VIYI), and 183–203 (LKIL…YGAV). One can recognise a CN hydrolase domain in the interval 220–464 (VQPSIPQTAK…QGLIPQKLTT (245 aa)). Catalysis depends on E259, which acts as the Proton acceptor. The active site involves K322. Residue C372 is the Nucleophile of the active site. A helical membrane pass occupies residues 474–494 (FAMLLSIVFIILIHYLLSLIF).

The protein belongs to the CN hydrolase family. Apolipoprotein N-acyltransferase subfamily.

The protein localises to the cell inner membrane. It carries out the reaction N-terminal S-1,2-diacyl-sn-glyceryl-L-cysteinyl-[lipoprotein] + a glycerophospholipid = N-acyl-S-1,2-diacyl-sn-glyceryl-L-cysteinyl-[lipoprotein] + a 2-acyl-sn-glycero-3-phospholipid + H(+). The protein operates within protein modification; lipoprotein biosynthesis (N-acyl transfer). Its function is as follows. Catalyzes the phospholipid dependent N-acylation of the N-terminal cysteine of apolipoprotein, the last step in lipoprotein maturation. This is Apolipoprotein N-acyltransferase from Rickettsia prowazekii (strain Madrid E).